The following is a 254-amino-acid chain: Triosephosphate isomerase (254 aa).

10–12 (NWK) contacts substrate. The Electrophile role is filled by histidine 99. The active-site Proton acceptor is glutamate 169. Substrate contacts are provided by residues glycine 175, serine 215, and 236-237 (GG).

This sequence belongs to the triosephosphate isomerase family. As to quaternary structure, homodimer.

It localises to the cytoplasm. It carries out the reaction D-glyceraldehyde 3-phosphate = dihydroxyacetone phosphate. The protein operates within carbohydrate biosynthesis; gluconeogenesis. Its pathway is carbohydrate degradation; glycolysis; D-glyceraldehyde 3-phosphate from glycerone phosphate: step 1/1. Functionally, involved in the gluconeogenesis. Catalyzes stereospecifically the conversion of dihydroxyacetone phosphate (DHAP) to D-glyceraldehyde-3-phosphate (G3P). The polypeptide is Triosephosphate isomerase (Chlamydia caviae (strain ATCC VR-813 / DSM 19441 / 03DC25 / GPIC) (Chlamydophila caviae)).